A 133-amino-acid polypeptide reads, in one-letter code: Small ribosomal subunit protein bS6 (133 aa).

This sequence belongs to the bacterial ribosomal protein bS6 family.

Functionally, binds together with bS18 to 16S ribosomal RNA. The protein is Small ribosomal subunit protein bS6 of Chlorobium limicola (strain DSM 245 / NBRC 103803 / 6330).